The sequence spans 100 residues: Large ribosomal subunit protein uL23 (100 aa).

Belongs to the universal ribosomal protein uL23 family. In terms of assembly, part of the 50S ribosomal subunit. Contacts protein L29, and trigger factor when it is bound to the ribosome.

One of the early assembly proteins it binds 23S rRNA. One of the proteins that surrounds the polypeptide exit tunnel on the outside of the ribosome. Forms the main docking site for trigger factor binding to the ribosome. The polypeptide is Large ribosomal subunit protein uL23 (Mycobacterium leprae (strain Br4923)).